Consider the following 450-residue polypeptide: tRNA modification GTPase MnmE (450 aa).

The (6S)-5-formyl-5,6,7,8-tetrahydrofolate site is built by R23, E80, and R123. The TrmE-type G domain occupies 219–372 (GLHVVLAGKP…LRQRLLQLAG (154 aa)). N229 serves as a coordination point for K(+). GTP contacts are provided by residues 229-234 (NVGKSS), 248-254 (TPIAGTT), 273-276 (DTAG), and 353-355 (SAR). Mg(2+) is bound at residue S233. K(+) is bound by residues T248, I250, and T253. T254 provides a ligand contact to Mg(2+). Residue K450 coordinates (6S)-5-formyl-5,6,7,8-tetrahydrofolate.

It belongs to the TRAFAC class TrmE-Era-EngA-EngB-Septin-like GTPase superfamily. TrmE GTPase family. Homodimer. Heterotetramer of two MnmE and two MnmG subunits. K(+) is required as a cofactor.

The protein resides in the cytoplasm. In terms of biological role, exhibits a very high intrinsic GTPase hydrolysis rate. Involved in the addition of a carboxymethylaminomethyl (cmnm) group at the wobble position (U34) of certain tRNAs, forming tRNA-cmnm(5)s(2)U34. The chain is tRNA modification GTPase MnmE from Bordetella bronchiseptica (strain ATCC BAA-588 / NCTC 13252 / RB50) (Alcaligenes bronchisepticus).